Reading from the N-terminus, the 341-residue chain is Ketol-acid reductoisomerase (NADP(+)) (341 aa).

A KARI N-terminal Rossmann domain is found at 2 to 181 (AKVYYNGDAN…GATRAGVLET (180 aa)). Residues 25-28 (YGSQ), arginine 48, serine 52, and 82-85 (DEKQ) each bind NADP(+). The active site involves histidine 107. Glycine 133 contacts NADP(+). The KARI C-terminal knotted domain occupies 182 to 327 (TFKEETETDL…RELRSMMPFV (146 aa)). Positions 190, 194, 226, and 230 each coordinate Mg(2+). Serine 251 provides a ligand contact to substrate.

This sequence belongs to the ketol-acid reductoisomerase family. Mg(2+) serves as cofactor.

The catalysed reaction is (2R)-2,3-dihydroxy-3-methylbutanoate + NADP(+) = (2S)-2-acetolactate + NADPH + H(+). The enzyme catalyses (2R,3R)-2,3-dihydroxy-3-methylpentanoate + NADP(+) = (S)-2-ethyl-2-hydroxy-3-oxobutanoate + NADPH + H(+). Its pathway is amino-acid biosynthesis; L-isoleucine biosynthesis; L-isoleucine from 2-oxobutanoate: step 2/4. It functions in the pathway amino-acid biosynthesis; L-valine biosynthesis; L-valine from pyruvate: step 2/4. Involved in the biosynthesis of branched-chain amino acids (BCAA). Catalyzes an alkyl-migration followed by a ketol-acid reduction of (S)-2-acetolactate (S2AL) to yield (R)-2,3-dihydroxy-isovalerate. In the isomerase reaction, S2AL is rearranged via a Mg-dependent methyl migration to produce 3-hydroxy-3-methyl-2-ketobutyrate (HMKB). In the reductase reaction, this 2-ketoacid undergoes a metal-dependent reduction by NADPH to yield (R)-2,3-dihydroxy-isovalerate. This Geobacillus sp. (strain WCH70) protein is Ketol-acid reductoisomerase (NADP(+)).